The primary structure comprises 281 residues: Pantothenate synthetase (281 aa).

30–37 lines the ATP pocket; the sequence is MGALHHGH. Histidine 37 functions as the Proton donor in the catalytic mechanism. Glutamine 61 is a (R)-pantoate binding site. Residue glutamine 61 coordinates beta-alanine. An ATP-binding site is contributed by 147-150; it reads GEKD. Glutamine 153 is a binding site for (R)-pantoate. ATP is bound by residues leucine 176 and 184 to 187; that span reads SSSR.

This sequence belongs to the pantothenate synthetase family. As to quaternary structure, homodimer.

It is found in the cytoplasm. It carries out the reaction (R)-pantoate + beta-alanine + ATP = (R)-pantothenate + AMP + diphosphate + H(+). The protein operates within cofactor biosynthesis; (R)-pantothenate biosynthesis; (R)-pantothenate from (R)-pantoate and beta-alanine: step 1/1. Catalyzes the condensation of pantoate with beta-alanine in an ATP-dependent reaction via a pantoyl-adenylate intermediate. This chain is Pantothenate synthetase, found in Bartonella bacilliformis (strain ATCC 35685 / KC583 / Herrer 020/F12,63).